The chain runs to 327 residues: tRNA-dihydrouridine(20/20a) synthase (327 aa).

Residues 17–19 and Q69 contribute to the FMN site; that span reads PML. C99 serves as the catalytic Proton donor. Residues K138, H170, 210–212, and 232–233 each bind FMN; these read NGG and GR.

The protein belongs to the Dus family. DusA subfamily. FMN is required as a cofactor.

It catalyses the reaction 5,6-dihydrouridine(20) in tRNA + NADP(+) = uridine(20) in tRNA + NADPH + H(+). The enzyme catalyses 5,6-dihydrouridine(20) in tRNA + NAD(+) = uridine(20) in tRNA + NADH + H(+). It carries out the reaction 5,6-dihydrouridine(20a) in tRNA + NADP(+) = uridine(20a) in tRNA + NADPH + H(+). The catalysed reaction is 5,6-dihydrouridine(20a) in tRNA + NAD(+) = uridine(20a) in tRNA + NADH + H(+). Its function is as follows. Catalyzes the synthesis of 5,6-dihydrouridine (D), a modified base found in the D-loop of most tRNAs, via the reduction of the C5-C6 double bond in target uridines. Specifically modifies U20 and U20a in tRNAs. The chain is tRNA-dihydrouridine(20/20a) synthase from Pasteurella multocida (strain Pm70).